The primary structure comprises 644 residues: 3D-(3,5/4)-trihydroxycyclohexane-1,2-dione hydrolase 1 (644 aa).

Glu-65 contacts thiamine diphosphate. The interval 442-522 is thiamine pyrophosphate binding; sequence SLPGDLQRMW…INVLLFDNSG (81 aa). The Mg(2+) site is built by Asp-493 and Asn-520.

This sequence belongs to the TPP enzyme family. It depends on Mg(2+) as a cofactor. Requires thiamine diphosphate as cofactor.

It catalyses the reaction 3D-3,5/4-trihydroxycyclohexane-1,2-dione + H2O = 5-deoxy-D-glucuronate + H(+). The protein operates within polyol metabolism; myo-inositol degradation into acetyl-CoA; acetyl-CoA from myo-inositol: step 3/7. Its function is as follows. Involved in the cleavage of the C1-C2 bond of 3D-(3,5/4)-trihydroxycyclohexane-1,2-dione (THcHDO) to yield 5-deoxy-glucuronate (5DG). In Bacillus cereus (strain ZK / E33L), this protein is 3D-(3,5/4)-trihydroxycyclohexane-1,2-dione hydrolase 1.